Here is a 299-residue protein sequence, read N- to C-terminus: Recombination-associated protein RdgC (299 aa).

Belongs to the RdgC family.

The protein localises to the cytoplasm. The protein resides in the nucleoid. Functionally, may be involved in recombination. The sequence is that of Recombination-associated protein RdgC from Bordetella bronchiseptica (strain ATCC BAA-588 / NCTC 13252 / RB50) (Alcaligenes bronchisepticus).